A 554-amino-acid polypeptide reads, in one-letter code: (E)-beta-caryophyllene synthase (554 aa).

The Mn(2+) site is built by D313 and D317. The DDXXD motif motif lies at D313–D317. 2 homodimerization regions span residues Y319–L325 and E391–I427. Mn(2+) is bound by residues D457 and E465.

This sequence belongs to the terpene synthase family. As to quaternary structure, homodimer. The cofactor is Mn(2+). Requires Mg(2+) as cofactor. As to expression, expressed in peltate glandular trichomes. Present at low levels in flowers, leaves and stems.

The enzyme catalyses (2E,6E)-farnesyl diphosphate = (-)-(E)-beta-caryophyllene + diphosphate. It catalyses the reaction (2E,6E)-farnesyl diphosphate = alpha-humulene + diphosphate. The protein operates within secondary metabolite biosynthesis; terpenoid biosynthesis. Functionally, involved in the biosynthesis of phenolic sesquiterpenes natural products. Sesquiterpene synthase converting (2E,6E)-farnesyl diphosphate (FPP) to (E)-beta-caryophyllene and alpha-humulene. The chain is (E)-beta-caryophyllene synthase from Origanum vulgare (Wild marjoram).